Consider the following 117-residue polypeptide: MASFPLLLTLLTHCAGSWAQSVLTQPPSASGTPGQRVTISCSGSSSNIGSNTVNWYQQLPGTAPKLLIYSNNQRPSGVPDRFSGSKSGTSASLAISGLQSEDEADYYCAAWDDSLNG.

An N-terminal signal peptide occupies residues 1–19 (MASFPLLLTLLTHCAGSWA). Glutamine 20 carries the post-translational modification Pyrrolidone carboxylic acid. The interval 20-44 (QSVLTQPPSASGTPGQRVTISCSGS) is framework-1. Residues 20–117 (QSVLTQPPSA…CAAWDDSLNG (98 aa)) form the Ig-like domain. Over residues 24 to 35 (TQPPSASGTPGQ) the composition is skewed to polar residues. The tract at residues 24-45 (TQPPSASGTPGQRVTISCSGSS) is disordered. Cysteine 41 and cysteine 108 are oxidised to a cystine. The tract at residues 45–52 (SSNIGSNT) is complementarity-determining-1. The framework-2 stretch occupies residues 53 to 69 (VNWYQQLPGTAPKLLIY). The segment at 70-72 (SNN) is complementarity-determining-2. The interval 73–108 (QRPSGVPDRFSGSKSGTSASLAISGLQSEDEADYYC) is framework-3. The complementarity-determining-3 stretch occupies residues 109–117 (AAWDDSLNG).

In terms of assembly, immunoglobulins are composed of two identical heavy chains and two identical light chains; disulfide-linked.

It is found in the secreted. The protein resides in the cell membrane. In terms of biological role, v region of the variable domain of immunoglobulin light chains that participates in the antigen recognition. Immunoglobulins, also known as antibodies, are membrane-bound or secreted glycoproteins produced by B lymphocytes. In the recognition phase of humoral immunity, the membrane-bound immunoglobulins serve as receptors which, upon binding of a specific antigen, trigger the clonal expansion and differentiation of B lymphocytes into immunoglobulins-secreting plasma cells. Secreted immunoglobulins mediate the effector phase of humoral immunity, which results in the elimination of bound antigens. The antigen binding site is formed by the variable domain of one heavy chain, together with that of its associated light chain. Thus, each immunoglobulin has two antigen binding sites with remarkable affinity for a particular antigen. The variable domains are assembled by a process called V-(D)-J rearrangement and can then be subjected to somatic hypermutations which, after exposure to antigen and selection, allow affinity maturation for a particular antigen. This chain is Immunoglobulin lambda variable 1-44, found in Homo sapiens (Human).